The primary structure comprises 311 residues: Ribosomal protein L11 methyltransferase (311 aa).

T162, G183, D205, and N248 together coordinate S-adenosyl-L-methionine.

It belongs to the methyltransferase superfamily. PrmA family.

The protein localises to the cytoplasm. The enzyme catalyses L-lysyl-[protein] + 3 S-adenosyl-L-methionine = N(6),N(6),N(6)-trimethyl-L-lysyl-[protein] + 3 S-adenosyl-L-homocysteine + 3 H(+). Functionally, methylates ribosomal protein L11. The polypeptide is Ribosomal protein L11 methyltransferase (Bacillus licheniformis (strain ATCC 14580 / DSM 13 / JCM 2505 / CCUG 7422 / NBRC 12200 / NCIMB 9375 / NCTC 10341 / NRRL NRS-1264 / Gibson 46)).